A 396-amino-acid chain; its full sequence is S-adenosylmethionine synthase (396 aa).

Histidine 16 is an ATP binding site. A Mg(2+)-binding site is contributed by aspartate 18. Glutamate 44 lines the K(+) pocket. L-methionine is bound by residues glutamate 57 and glutamine 100. The segment at 100-110 (QSPDIAQGVDD) is flexible loop. ATP is bound by residues 174–176 (DAK), 241–242 (RF), aspartate 250, 256–257 (RK), alanine 273, and lysine 277. Aspartate 250 is an L-methionine binding site. Lysine 281 contributes to the L-methionine binding site.

This sequence belongs to the AdoMet synthase family. As to quaternary structure, homotetramer; dimer of dimers. Mg(2+) serves as cofactor. It depends on K(+) as a cofactor.

The protein localises to the cytoplasm. The catalysed reaction is L-methionine + ATP + H2O = S-adenosyl-L-methionine + phosphate + diphosphate. It functions in the pathway amino-acid biosynthesis; S-adenosyl-L-methionine biosynthesis; S-adenosyl-L-methionine from L-methionine: step 1/1. Its function is as follows. Catalyzes the formation of S-adenosylmethionine (AdoMet) from methionine and ATP. The overall synthetic reaction is composed of two sequential steps, AdoMet formation and the subsequent tripolyphosphate hydrolysis which occurs prior to release of AdoMet from the enzyme. The polypeptide is S-adenosylmethionine synthase (Pediococcus pentosaceus (strain ATCC 25745 / CCUG 21536 / LMG 10740 / 183-1w)).